We begin with the raw amino-acid sequence, 757 residues long: Palmitoyltransferase AKR1 (757 aa).

Polar residues-rich tracts occupy residues 1–20 and 36–46; these read MSDINTESGESTSLPNSTDP and ESISSLQPIVS. The tract at residues 1–54 is disordered; sequence MSDINTESGESTSLPNSTDPPLSDVNIDVEDDDTAESISSLQPIVSNTTNPPEE. At 1-307 the chain is on the cytoplasmic side; sequence MSDINTESGE…KLFKKSDHAK (307 aa). ANK repeat units lie at residues 58–88, 92–121, 126–155, 159–188, 197–226, and 230–259; these read PVLGQYHQACQKGDLATVKQLLDSGVLDLNT, GDITGLHWASINNRLSVVKYLISQGIDVNA, LEATPLHWAARYGYVHIVDCLLNKGADPTM, QGFNLLHLAVNSSNVMLVAYVLFFVVAKGI, KGRTPLLWAAYQGDSLSVMLLLKFGASTKI, and GGFTPLHWATVKGQPYVLTHLIRDGADFFL. The chain crosses the membrane as a helical span at residues 308-328; that stretch reads VITFFVPLVALSIIFILFTHL. The Lumenal portion of the chain corresponds to 329 to 331; the sequence is HPL. A helical membrane pass occupies residues 332-352; the sequence is FALLISLIFGLAVNKALKELI. Over 353–375 the chain is Cytoplasmic; it reads LPSYSNYGLHSTSLLKSPFLSGT. A helical membrane pass occupies residues 376-396; the sequence is FFGSLLLLTIVWIFKIAPFTI. The Lumenal portion of the chain corresponds to 397-402; sequence FKSRLL. Residues 403 to 423 traverse the membrane as a helical segment; it reads TNFFMFLILMQIYYLFIKLIF. Over 424-498 the chain is Cytoplasmic; the sequence is SDPGCVPIET…YNDIGLKNHK (75 aa). In terms of domain architecture, DHHC spans 455-505; that stretch reads NFCLETWIRKPLRSHFSTLNTHNVARFDHFCPWIYNDIGLKNHKNFMWFIL. Catalysis depends on Cys485, which acts as the S-palmitoyl cysteine intermediate. The chain crosses the membrane as a helical span at residues 499–519; that stretch reads NFMWFILLTEVGIWFFISLTM. Over 520 to 550 the chain is Lumenal; that stretch reads KYFDILEDTNEDVACFLLGDDELCAGFVYDR. The helical transmembrane segment at 551 to 571 threads the bilayer; the sequence is FTFLIALWALIQSVWVGFLIV. The Cytoplasmic segment spans residues 572 to 757; it reads VQVFQTFTGV…YPEPTGPESV (186 aa). The disordered stretch occupies residues 614 to 647; that stretch reads ELRNDDDDTAASRTGNNPNHSNGTTIPSEGSRIN. The segment covering 624–646 has biased composition (polar residues); that stretch reads ASRTGNNPNHSNGTTIPSEGSRI.

This sequence belongs to the DHHC palmitoyltransferase family. AKR/ZDHHC17 subfamily.

It is found in the early endosome membrane. The protein resides in the golgi apparatus membrane. It carries out the reaction L-cysteinyl-[protein] + hexadecanoyl-CoA = S-hexadecanoyl-L-cysteinyl-[protein] + CoA. Functionally, palmitoyltransferase specific for casein kinase 1. The sequence is that of Palmitoyltransferase AKR1 (AKR1) from Naumovozyma castellii (Yeast).